The primary structure comprises 240 residues: tRNA (guanine-N(1)-)-methyltransferase (240 aa).

S-adenosyl-L-methionine contacts are provided by residues Gly108 and 127–132 (IGDYVL).

The protein belongs to the RNA methyltransferase TrmD family. Homodimer.

The protein localises to the cytoplasm. The enzyme catalyses guanosine(37) in tRNA + S-adenosyl-L-methionine = N(1)-methylguanosine(37) in tRNA + S-adenosyl-L-homocysteine + H(+). Functionally, specifically methylates guanosine-37 in various tRNAs. The protein is tRNA (guanine-N(1)-)-methyltransferase of Lactobacillus johnsonii (strain CNCM I-12250 / La1 / NCC 533).